Reading from the N-terminus, the 160-residue chain is SsrA-binding protein (160 aa).

The interval 131–160 is disordered; it reads KKEYDKRDTEKARDSDREIQRAIRSKGKED.

Belongs to the SmpB family.

It is found in the cytoplasm. In terms of biological role, required for rescue of stalled ribosomes mediated by trans-translation. Binds to transfer-messenger RNA (tmRNA), required for stable association of tmRNA with ribosomes. tmRNA and SmpB together mimic tRNA shape, replacing the anticodon stem-loop with SmpB. tmRNA is encoded by the ssrA gene; the 2 termini fold to resemble tRNA(Ala) and it encodes a 'tag peptide', a short internal open reading frame. During trans-translation Ala-aminoacylated tmRNA acts like a tRNA, entering the A-site of stalled ribosomes, displacing the stalled mRNA. The ribosome then switches to translate the ORF on the tmRNA; the nascent peptide is terminated with the 'tag peptide' encoded by the tmRNA and targeted for degradation. The ribosome is freed to recommence translation, which seems to be the essential function of trans-translation. In Azotobacter vinelandii (strain DJ / ATCC BAA-1303), this protein is SsrA-binding protein.